A 462-amino-acid polypeptide reads, in one-letter code: Cell wall mannoprotein 1 (462 aa).

A signal peptide spans 1-18 (MKFLSSLVVLGLSAQALA). S313 provides a ligand contact to hexadecanoate. The disordered stretch occupies residues 346–429 (FAGTGPAPTT…SVPAAPTGGN (84 aa)). The span at 347-366 (AGTGPAPTTSSTPEASTAPA) shows a compositional bias: low complexity. Positions 399 to 420 (VWPTSTTASPDVQPTITSSGTS) are enriched in polar residues.

This sequence belongs to the cell wall mannoprotein 1 family. Monomer. In terms of processing, mannoprotein, glycosylated.

The protein localises to the secreted. Its subcellular location is the cell wall. Constitutive protein of the cell wall. Binds fatty acids and may thus serve as a fatty acid transporter between P.marneffei and host cells during infection. Abundant antigen target of host humoral immune response. In Talaromyces marneffei (Penicillium marneffei), this protein is Cell wall mannoprotein 1.